A 392-amino-acid polypeptide reads, in one-letter code: Methylthioribose-1-phosphate isomerase (392 aa).

The Proton donor role is filled by Asp267.

Belongs to the eIF-2B alpha/beta/delta subunits family. MtnA subfamily.

Its subcellular location is the cytoplasm. It is found in the nucleus. The enzyme catalyses 5-(methylsulfanyl)-alpha-D-ribose 1-phosphate = 5-(methylsulfanyl)-D-ribulose 1-phosphate. It participates in amino-acid biosynthesis; L-methionine biosynthesis via salvage pathway; L-methionine from S-methyl-5-thio-alpha-D-ribose 1-phosphate: step 1/6. Catalyzes the interconversion of methylthioribose-1-phosphate (MTR-1-P) into methylthioribulose-1-phosphate (MTRu-1-P). The protein is Methylthioribose-1-phosphate isomerase of Ajellomyces dermatitidis (strain ER-3 / ATCC MYA-2586) (Blastomyces dermatitidis).